Consider the following 187-residue polypeptide: UPF0301 protein VS_2679 (187 aa).

Belongs to the UPF0301 (AlgH) family.

The chain is UPF0301 protein VS_2679 from Vibrio atlanticus (strain LGP32) (Vibrio splendidus (strain Mel32)).